Consider the following 443-residue polypeptide: Tubulin beta chain (443 aa).

GTP-binding residues include Q11, E69, S138, G142, T143, G144, N204, and N226. E69 lines the Mg(2+) pocket.

This sequence belongs to the tubulin family. Dimer of alpha and beta chains. A typical microtubule is a hollow water-filled tube with an outer diameter of 25 nm and an inner diameter of 15 nM. Alpha-beta heterodimers associate head-to-tail to form protofilaments running lengthwise along the microtubule wall with the beta-tubulin subunit facing the microtubule plus end conferring a structural polarity. Microtubules usually have 13 protofilaments but different protofilament numbers can be found in some organisms and specialized cells. Mg(2+) serves as cofactor.

The protein localises to the cytoplasm. Its subcellular location is the cytoskeleton. Its function is as follows. Tubulin is the major constituent of microtubules, a cylinder consisting of laterally associated linear protofilaments composed of alpha- and beta-tubulin heterodimers. Microtubules grow by the addition of GTP-tubulin dimers to the microtubule end, where a stabilizing cap forms. Below the cap, tubulin dimers are in GDP-bound state, owing to GTPase activity of alpha-tubulin. This Thalassiosira weissflogii (Marine diatom) protein is Tubulin beta chain.